Here is a 210-residue protein sequence, read N- to C-terminus: Probable nicotinate-nucleotide adenylyltransferase (210 aa).

It belongs to the NadD family.

It catalyses the reaction nicotinate beta-D-ribonucleotide + ATP + H(+) = deamido-NAD(+) + diphosphate. It participates in cofactor biosynthesis; NAD(+) biosynthesis; deamido-NAD(+) from nicotinate D-ribonucleotide: step 1/1. In terms of biological role, catalyzes the reversible adenylation of nicotinate mononucleotide (NaMN) to nicotinic acid adenine dinucleotide (NaAD). In Streptococcus pyogenes serotype M6 (strain ATCC BAA-946 / MGAS10394), this protein is Probable nicotinate-nucleotide adenylyltransferase.